The primary structure comprises 399 residues: Dual-specificity RNA methyltransferase RlmN (399 aa).

Glu-122 (proton acceptor) is an active-site residue. A Radical SAM core domain is found at 128–371 (ETDRGTLCVS…VRTPRGRDIL (244 aa)). Cys-135 and Cys-374 are joined by a disulfide. Residues Cys-142, Cys-146, and Cys-149 each coordinate [4Fe-4S] cluster. S-adenosyl-L-methionine contacts are provided by residues 200–201 (GE), Ser-232, 254–256 (SLH), and Asn-331. The active-site S-methylcysteine intermediate is Cys-374.

Belongs to the radical SAM superfamily. RlmN family. [4Fe-4S] cluster is required as a cofactor.

The protein resides in the cytoplasm. The enzyme catalyses adenosine(2503) in 23S rRNA + 2 reduced [2Fe-2S]-[ferredoxin] + 2 S-adenosyl-L-methionine = 2-methyladenosine(2503) in 23S rRNA + 5'-deoxyadenosine + L-methionine + 2 oxidized [2Fe-2S]-[ferredoxin] + S-adenosyl-L-homocysteine. It catalyses the reaction adenosine(37) in tRNA + 2 reduced [2Fe-2S]-[ferredoxin] + 2 S-adenosyl-L-methionine = 2-methyladenosine(37) in tRNA + 5'-deoxyadenosine + L-methionine + 2 oxidized [2Fe-2S]-[ferredoxin] + S-adenosyl-L-homocysteine. In terms of biological role, specifically methylates position 2 of adenine 2503 in 23S rRNA and position 2 of adenine 37 in tRNAs. m2A2503 modification seems to play a crucial role in the proofreading step occurring at the peptidyl transferase center and thus would serve to optimize ribosomal fidelity. The sequence is that of Dual-specificity RNA methyltransferase RlmN from Rhodopseudomonas palustris (strain TIE-1).